A 688-amino-acid chain; its full sequence is UvrABC system protein C (688 aa).

Residues 11–90 enclose the GIY-YIG domain; it reads LTPGVYLYKD…IKKHRPRYNI (80 aa). The region spanning 200-235 is the UVR domain; the sequence is GELVDALRTEMEAASQGLDFERAAVLRDRIRALERT.

Belongs to the UvrC family. As to quaternary structure, interacts with UvrB in an incision complex.

Its subcellular location is the cytoplasm. Functionally, the UvrABC repair system catalyzes the recognition and processing of DNA lesions. UvrC both incises the 5' and 3' sides of the lesion. The N-terminal half is responsible for the 3' incision and the C-terminal half is responsible for the 5' incision. The protein is UvrABC system protein C of Nitratidesulfovibrio vulgaris (strain ATCC 29579 / DSM 644 / CCUG 34227 / NCIMB 8303 / VKM B-1760 / Hildenborough) (Desulfovibrio vulgaris).